Reading from the N-terminus, the 438-residue chain is MEYFKNVPKVQYEGPKSNNPYAFKFYNPDEIIDGKPLKEHLRFAVAYWHTFTGTGTDPFGASTMQRPWDRFSDPMDIAKARVEAAFEFFEKLDVPFFCFHDRDIAPEGDNLRETNKNLGTIVAMIKDYLKTSKAKVLWGTANLFSHPRYVHGAATSCNADVFAYAAAQVKKALEITKELGGQNYVFWGGREGYETLLNTDTELELDNLARFLHMAVEYAKEIGFEGQLLIEPKPKEPTKHQYDFDAAHVYAFLKKYGLDKYFKLNIEVNHATLAGHEFQHELRYARINNILGSIDANMRDMLLGWDTDQFPTDIRMTTLAMYEVIKMGGFDKGGLNFDAKVRRASFEPEDLFIAHIAGMDAFAKGFKVAYRLVKDGVFDKFIEERYKSYKEGIGAEIVSGRANFKTLEEYALNNPKIENKSGKQELLESILNQYLFTE.

Catalysis depends on residues histidine 100 and aspartate 103. Mg(2+) contacts are provided by glutamate 231, glutamate 267, histidine 270, aspartate 295, aspartate 306, aspartate 308, and aspartate 338.

Belongs to the xylose isomerase family. As to quaternary structure, homotetramer. It depends on Mg(2+) as a cofactor.

The protein localises to the cytoplasm. It carries out the reaction alpha-D-xylose = alpha-D-xylulofuranose. The chain is Xylose isomerase from Caldanaerobacter subterraneus subsp. yonseiensis (Thermoanaerobacter yonseiensis).